Here is a 744-residue protein sequence, read N- to C-terminus: Biotin sulfoxide reductase (744 aa).

Ser121 contributes to the Mo-bis(molybdopterin guanine dinucleotide) binding site.

The protein belongs to the prokaryotic molybdopterin-containing oxidoreductase family. It depends on Mo-bis(molybdopterin guanine dinucleotide) as a cofactor.

In terms of biological role, this enzyme may serve as a scavenger, allowing the cell to utilize biotin sulfoxide as a biotin source. It reduces a spontaneous oxidation product of biotin, D-biotin D-sulfoxide (BSO or BDS), back to biotin. The protein is Biotin sulfoxide reductase of Cereibacter sphaeroides (Rhodobacter sphaeroides).